The sequence spans 140 residues: Nucleoside diphosphate kinase (140 aa).

Positions 11, 59, 87, 93, 104, and 114 each coordinate ATP. H117 functions as the Pros-phosphohistidine intermediate in the catalytic mechanism.

The protein belongs to the NDK family. Homotetramer. Mg(2+) is required as a cofactor.

The protein resides in the cytoplasm. It carries out the reaction a 2'-deoxyribonucleoside 5'-diphosphate + ATP = a 2'-deoxyribonucleoside 5'-triphosphate + ADP. It catalyses the reaction a ribonucleoside 5'-diphosphate + ATP = a ribonucleoside 5'-triphosphate + ADP. Functionally, major role in the synthesis of nucleoside triphosphates other than ATP. The ATP gamma phosphate is transferred to the NDP beta phosphate via a ping-pong mechanism, using a phosphorylated active-site intermediate. This is Nucleoside diphosphate kinase from Azorhizobium caulinodans (strain ATCC 43989 / DSM 5975 / JCM 20966 / LMG 6465 / NBRC 14845 / NCIMB 13405 / ORS 571).